A 226-amino-acid chain; its full sequence is MIRVRLVIAQCTVDYVGRLTAHLPSARRLLLFKADGSVSVHADDRAYKPLNWMSPPCWLTEEPGGDSPVWVVTNKGGEQLRISVEEIEHDSSHELGVDPGLVKDGVEAHLQVLLAEHVQLLGEGYTLVRREYMTAIGPVDLLCRDESGGAVAVEIKRRGEIDGVEQLTRYLELLNRDSVLAPVKGVFAAQQIKPQARTLATDRGIRCVTLDYDKMRGMDSDEYRLF.

The protein belongs to the NucS endonuclease family.

The protein resides in the cytoplasm. In terms of biological role, cleaves both 3' and 5' ssDNA extremities of branched DNA structures. This chain is Endonuclease NucS, found in Mycobacterium ulcerans (strain Agy99).